The chain runs to 552 residues: Gamma-aminobutyric acid receptor subunit alpha-4 (552 aa).

The signal sequence occupies residues 1–35 (MVSVQKVPAIALCSGVSLALLHFLCLAACLNESPG). At 36-259 (QNSKDEKLCP…FHLRRKMGYF (224 aa)) the chain is on the extracellular side. N-linked (GlcNAc...) asparagine glycosylation is present at N47. R100 is a 4-aminobutanoate binding site. Residues N144 and N157 are each glycosylated (N-linked (GlcNAc...) asparagine). Position 163 (T163) interacts with 4-aminobutanoate. The cysteines at positions 172 and 186 are disulfide-linked. A helical transmembrane segment spans residues 260–280 (MIQTYIPCIMTVILSQVSFWI). Over 281–284 (NKES) the chain is Cytoplasmic. The helical transmembrane segment at 285 to 305 (VPARTVFGITTVLTMTTLSIS) threads the bilayer. Topologically, residues 306–318 (ARHSLPKVSYATA) are extracellular. The chain crosses the membrane as a helical span at residues 319 to 341 (MDWFIAVCFAFVFSALIEFAAVN). Topologically, residues 342-515 (YFTNIQMQKA…PPPSGSGTSK (174 aa)) are cytoplasmic. 2 disordered regions span residues 353–480 (KKIS…FGSR) and 492–513 (GAAGNVSATPPPPAPPPSGSGT). Positions 396–406 (SESDVKSRTEV) are enriched in basic and acidic residues. Polar residues predominate over residues 407–422 (GNHSSKTSAVQESSEA). Residues 445 to 458 (SAAARGLSSAASPS) show a composition bias toward low complexity. Residues 500–509 (TPPPPAPPPS) are compositionally biased toward pro residues. Residues 516–538 (IDKYARILFPVTFGAFNMVYWVV) traverse the membrane as a helical segment. Residues 539-552 (YLSKDTMEKSESLM) are Extracellular-facing.

This sequence belongs to the ligand-gated ion channel (TC 1.A.9) family. Gamma-aminobutyric acid receptor (TC 1.A.9.5) subfamily. GABRA4 sub-subfamily. As to quaternary structure, heteropentamer, formed by a combination of alpha (GABRA1-6), beta (GABRB1-3), gamma (GABRG1-3), delta (GABRD), epsilon (GABRE), rho (GABRR1-3), pi (GABRP) and theta (GABRQ) chains, each subunit exhibiting distinct physiological and pharmacological properties. As to expression, expressed in the brain.

The protein localises to the cell membrane. The protein resides in the postsynaptic cell membrane. The catalysed reaction is chloride(in) = chloride(out). Potentiated by gaboxadol. Potentiated by histamine. Functionally, alpha subunit of the heteropentameric ligand-gated chloride channel gated by gamma-aminobutyric acid (GABA), a major inhibitory neurotransmitter in the brain. GABA-gated chloride channels, also named GABA(A) receptors (GABAAR), consist of five subunits arranged around a central pore and contain GABA active binding site(s) located at the alpha and beta subunit interface(s). Alpha-4/GABRA4 subunit often assembles with delta or gamma-2 subunits, in combination with beta subunits. When activated by GABA, GABAARs selectively allow the flow of chloride anions across the cell membrane down their electrochemical gradient. GABAARs containing alpha-4 are predominantly extrasynaptic, contributing to tonic inhibition in dentate granule cells and thalamic relay neurons. Extrasynaptic alpha-4-containing GABAARs control levels of excitability and network activity. GABAAR containing alpha-4-beta-3-delta subunits can simultaneously bind GABA and histamine where histamine binds at the interface of two neighboring beta subunits, which may be involved in the regulation of sleep and wakefulness. This is Gamma-aminobutyric acid receptor subunit alpha-4 from Mus musculus (Mouse).